The chain runs to 61 residues: Small ribosomal subunit protein uS14 (61 aa).

Zn(2+) is bound by residues C24, C27, C40, and C43.

The protein belongs to the universal ribosomal protein uS14 family. Zinc-binding uS14 subfamily. In terms of assembly, part of the 30S ribosomal subunit. Contacts proteins S3 and S10. The cofactor is Zn(2+).

Its function is as follows. Binds 16S rRNA, required for the assembly of 30S particles and may also be responsible for determining the conformation of the 16S rRNA at the A site. This chain is Small ribosomal subunit protein uS14, found in Pelobacter propionicus (strain DSM 2379 / NBRC 103807 / OttBd1).